Here is a 479-residue protein sequence, read N- to C-terminus: Alpha,alpha-trehalose-phosphate synthase [UDP-forming] 2 (479 aa).

D-glucose 6-phosphate-binding residues include Tyr-96 and Asp-150. Residues Arg-287 and Lys-292 each coordinate UDP. Arg-287 and Lys-292 together coordinate UDP-alpha-D-glucose. Arg-325 provides a ligand contact to D-glucose 6-phosphate. UDP-binding positions include 363 to 364 (SV) and 390 to 394 (LVSFE). Position 386-394 (386-394 (DGMNLVSFE)) interacts with UDP-alpha-D-glucose.

This sequence belongs to the glycosyltransferase 20 family.

The catalysed reaction is D-glucose 6-phosphate + UDP-alpha-D-glucose = alpha,alpha-trehalose 6-phosphate + UDP + H(+). It participates in carbohydrate biosynthesis. Functionally, synthase catalytic subunit of the trehalose synthase complex that catalyzes the production of trehalose from glucose-6-phosphate and UDP-alpha-D-glucose in a two step process. The disaccharide trehalose serves as a storage carbohydrate that is mobilized during conidial germination. Regulates the level of trehalose as a protectant for cell integrity during thermal and oxidative stress. This is Alpha,alpha-trehalose-phosphate synthase [UDP-forming] 2 from Aspergillus fumigatus (strain ATCC MYA-4609 / CBS 101355 / FGSC A1100 / Af293) (Neosartorya fumigata).